The chain runs to 481 residues: Endoplasmic reticulum lectin 1 (481 aa).

A signal peptide spans 1–27 (MRRSDRLRCAGASLLVVLCGVFRSSFG). 2 MRH domains span residues 108-245 (SSCS…LCNH) and 340-467 (SYCF…ICKI). Cystine bridges form between Cys110–Cys123, Cys198–Cys231, Cys214–Cys243, Cys342–Cys355, Cys419–Cys453, and Cys434–Cys465.

The protein resides in the endoplasmic reticulum lumen. In terms of biological role, probable lectin that binds selectively to improperly folded lumenal proteins. May function in endoplasmic reticulum quality control and endoplasmic reticulum-associated degradation (ERAD) of both non-glycosylated proteins and glycoproteins. The sequence is that of Endoplasmic reticulum lectin 1 (erlec1) from Xenopus tropicalis (Western clawed frog).